A 476-amino-acid chain; its full sequence is Ribulose bisphosphate carboxylase large chain (476 aa).

Positions 1 to 2 (MS) are excised as a propeptide. Pro3 carries the N-acetylproline modification. N6,N6,N6-trimethyllysine is present on Lys14. Residues Asn123 and Thr173 each coordinate substrate. The Proton acceptor role is filled by Lys175. Position 177 (Lys177) interacts with substrate. Mg(2+) contacts are provided by Lys201, Asp203, and Glu204. Lys201 bears the N6-carboxylysine mark. The active-site Proton acceptor is His294. Substrate-binding residues include Arg295, His327, and Ser379.

This sequence belongs to the RuBisCO large chain family. Type I subfamily. In terms of assembly, heterohexadecamer of 8 large chains and 8 small chains; disulfide-linked. The disulfide link is formed within the large subunit homodimers. The cofactor is Mg(2+). Post-translationally, the disulfide bond which can form in the large chain dimeric partners within the hexadecamer appears to be associated with oxidative stress and protein turnover.

The protein resides in the plastid. The protein localises to the chloroplast. The catalysed reaction is 2 (2R)-3-phosphoglycerate + 2 H(+) = D-ribulose 1,5-bisphosphate + CO2 + H2O. It carries out the reaction D-ribulose 1,5-bisphosphate + O2 = 2-phosphoglycolate + (2R)-3-phosphoglycerate + 2 H(+). RuBisCO catalyzes two reactions: the carboxylation of D-ribulose 1,5-bisphosphate, the primary event in carbon dioxide fixation, as well as the oxidative fragmentation of the pentose substrate in the photorespiration process. Both reactions occur simultaneously and in competition at the same active site. This is Ribulose bisphosphate carboxylase large chain from Brachypodium distachyon (Purple false brome).